A 122-amino-acid chain; its full sequence is Large ribosomal subunit protein uL14 (122 aa).

Belongs to the universal ribosomal protein uL14 family. As to quaternary structure, part of the 50S ribosomal subunit. Forms a cluster with proteins L3 and L19. In the 70S ribosome, L14 and L19 interact and together make contacts with the 16S rRNA in bridges B5 and B8.

In terms of biological role, binds to 23S rRNA. Forms part of two intersubunit bridges in the 70S ribosome. The chain is Large ribosomal subunit protein uL14 from Idiomarina loihiensis (strain ATCC BAA-735 / DSM 15497 / L2-TR).